The primary structure comprises 652 residues: Endoplasmic reticulum chaperone BiP (652 aa).

The signal sequence occupies residues 1 to 16; that stretch reads MRHLLLALLLLGGARA. ATP-binding positions include 34-37, Lys94, 225-227, 291-298, and 362-365; these read GTTY, GGT, EKAKRALS, and GSTR. The tract at residues 123 to 278 is nucleotide-binding (NBD); the sequence is KPHIQVDVGG…KKKTGKDVRK (156 aa). The interdomain linker stretch occupies residues 407–417; the sequence is QDTGDLVLLDV. Positions 418–498 are substrate-binding (SBD); it reads CPLTLGIETV…PRGVPQIEVT (81 aa). The disordered stretch occupies residues 630-652; it reads SKLYGSAGPPPTGEEEAAEKDEL. Acidic residues predominate over residues 642 to 652; the sequence is GEEEAAEKDEL. A Prevents secretion from ER motif is present at residues 649–652; that stretch reads KDEL.

It belongs to the heat shock protein 70 family. As to quaternary structure, monomer and homooligomer; homooligomerization via the interdomain linker inactivates the chaperone activity and acts as a storage of HSPA5/BiP molecules. Interacts with DNAJC10. Interacts with DNAJB9/ERdj4; leading to recruit HSPA5/BiP to ERN1/IRE1. Interacts with ERN1/IRE1; interaction takes place following interaction with DNAJB9/ERdj4 and leads to inactivate ERN1/IRE1.

It is found in the endoplasmic reticulum lumen. It localises to the melanosome. The protein resides in the cytoplasm. The protein localises to the cell surface. It carries out the reaction ATP + H2O = ADP + phosphate + H(+). The chaperone activity is regulated by ATP-induced allosteric coupling of the nucleotide-binding (NBD) and substrate-binding (SBD) domains. In the ADP-bound and nucleotide-free (apo) states, the two domains have little interaction. In contrast, in the ATP-bound state the two domains are tightly coupled, which results in drastically accelerated kinetics in both binding and release of polypeptide substrates. J domain-containing co-chaperones (DNAJB9/ERdj4 or DNAJC10/ERdj5) stimulate the ATPase activity and are required for efficient substrate recognition by HSPA5/BiP. Homooligomerization inactivates participating HSPA5/BiP protomers and probably act as reservoirs to store HSPA5/BiP molecules when they are not needed by the cell. In terms of biological role, endoplasmic reticulum chaperone that plays a key role in protein folding and quality control in the endoplasmic reticulum lumen. Involved in the correct folding of proteins and degradation of misfolded proteins via its interaction with DNAJC10/ERdj5, probably to facilitate the release of DNAJC10/ERdj5 from its substrate. Acts as a key repressor of the EIF2AK3/PERK and ERN1/IRE1-mediated unfolded protein response (UPR). In the unstressed endoplasmic reticulum, recruited by DNAJB9/ERdj4 to the luminal region of ERN1/IRE1, leading to disrupt the dimerization of ERN1/IRE1, thereby inactivating ERN1/IRE1. Also binds and inactivates EIF2AK3/PERK in unstressed cells. Accumulation of misfolded protein in the endoplasmic reticulum causes release of HSPA5/BiP from ERN1/IRE1 and EIF2AK3/PERK, allowing their homodimerization and subsequent activation. May also play a role in apoptosis and cell proliferation. This is Endoplasmic reticulum chaperone BiP from Gallus gallus (Chicken).